The primary structure comprises 881 residues: Protein translocase subunit SecA (881 aa).

ATP contacts are provided by residues Q83, 101-105 (GEGKT), and D492.

It belongs to the SecA family.

It localises to the plastid. The protein localises to the chloroplast stroma. The protein resides in the chloroplast thylakoid membrane. The enzyme catalyses ATP + H2O + cellular proteinSide 1 = ADP + phosphate + cellular proteinSide 2.. In terms of biological role, has a central role in coupling the hydrolysis of ATP to the transfer of proteins across the thylakoid membrane. This chain is Protein translocase subunit SecA, found in Emiliania huxleyi (Coccolithophore).